The sequence spans 32 residues: Secreted proteinase (32 aa).

Residues 1 to 32 (DTANDPKYGSQYAPQKVNADVDQGVXXXHPEL) are disordered. The Charge relay system role is filled by Asp22.

This sequence belongs to the peptidase S8 family.

It is found in the secreted. The protein is Secreted proteinase of Haloferax mediterranei (Halobacterium mediterranei).